The primary structure comprises 1384 residues: Contactin-associated protein 1 (1384 aa).

Positions 1–19 (MMHLRLFCILLAAVSGAEG) are cleaved as a signal peptide. The Extracellular segment spans residues 20–1283 (WGYYGCDEEL…PYYHDEGWVA (1264 aa)). The F5/8 type C domain maps to 25-168 (CDEELVGPLY…IGLRLGLYGC (144 aa)). Cys-25 and Cys-168 are disulfide-bonded. Residues Asn-120, Asn-128, and Asn-276 are each glycosylated (N-linked (GlcNAc...) asparagine). Laminin G-like domains follow at residues 203–355 (FKTE…AFRC) and 389–538 (FRTW…FDTC). An intrachain disulfide couples Cys-323 to Cys-355. N-linked (GlcNAc...) asparagine glycans are attached at residues Asn-420, Asn-499, and Asn-518. 4 disulfides stabilise this stretch: Cys-506–Cys-538, Cys-544–Cys-555, Cys-549–Cys-564, and Cys-566–Cys-576. One can recognise an EGF-like 1 domain in the interval 540–577 (ITDRCSPNMCEHDGRCYQSWDDFICYCELTGYKGETCH). In terms of domain architecture, Fibrinogen C-terminal spans 576–795 (CHTPLYKESC…NTISFHTGAA (220 aa)). N-linked (GlcNAc...) asparagine glycosylation is found at Asn-597, Asn-653, Asn-664, Asn-763, Asn-804, Asn-843, Asn-860, Asn-948, and Asn-956. The 144-residue stretch at 813–956 (FRTSAPSGVF…ANASEGTSPN (144 aa)) folds into the Laminin G-like 3 domain. 4 cysteine pairs are disulfide-bonded: Cys-930–Cys-957, Cys-961–Cys-974, Cys-968–Cys-983, and Cys-985–Cys-995. Positions 957–996 (CTGHCAHPRLPCFHGGRCVERYSYYTCDCDLTAFDGPYCN) constitute an EGF-like 2 domain. Asn-1078 and Asn-1147 each carry an N-linked (GlcNAc...) asparagine glycan. The Laminin G-like 4 domain occupies 1088-1250 (FSTSSAPAVL…VQGELSESNC (163 aa)). Cys-1209 and Cys-1250 form a disulfide bridge. A helical transmembrane segment spans residues 1284–1304 (ILLGFLVAFLLLGLVGMLVLF). Residues 1305–1384 (YLQNHRYKGS…PQILEESRSE (80 aa)) are Cytoplasmic-facing. Residues 1319 to 1328 (EPKAAHEYHP) show a composition bias toward basic and acidic residues. The segment at 1319-1384 (EPKAAHEYHP…PQILEESRSE (66 aa)) is disordered. An SH3-binding motif is present at residues 1328–1369 (PGSKPPLPTSGPAQVPTPTAAPNQAPASAPAPAPTPAPAPGP). Over residues 1339–1355 (PAQVPTPTAAPNQAPAS) the composition is skewed to low complexity. The span at 1356–1368 (APAPAPTPAPAPG) shows a compositional bias: pro residues. Ser-1383 is modified (phosphoserine).

It belongs to the neurexin family. Interacts with CNTN1/contactin in cis form. As to expression, predominantly expressed in brain. Weak expression detected in ovary, pancreas, colon, lung, heart, intestine and testis.

It is found in the membrane. The protein resides in the cell junction. Its subcellular location is the paranodal septate junction. Functionally, required, with CNTNAP2, for radial and longitudinal organization of myelinated axons. Plays a role in the formation of functional distinct domains critical for saltatory conduction of nerve impulses in myelinated nerve fibers. Demarcates the paranodal region of the axo-glial junction. In association with contactin involved in the signaling between axons and myelinating glial cells. The chain is Contactin-associated protein 1 (CNTNAP1) from Homo sapiens (Human).